The sequence spans 241 residues: uncharacterized protein (241 aa).

The 55-residue stretch at 32-86 (LKKWRNLFNIQQIELAKYLNVSPSVISDYEVGRRKNPGVNIIKKYVLALIEIDKE) folds into the HTH cro/C1-type domain. Positions 43 to 62 (QIELAKYLNVSPSVISDYEV) form a DNA-binding region, H-T-H motif.

This is an uncharacterized protein from Methanocaldococcus jannaschii (strain ATCC 43067 / DSM 2661 / JAL-1 / JCM 10045 / NBRC 100440) (Methanococcus jannaschii).